The sequence spans 246 residues: Type III pantothenate kinase (246 aa).

Position 6 to 13 (6 to 13 (DVGNTHSV)) interacts with ATP. 103–106 (GADR) is a binding site for substrate. The active-site Proton acceptor is the Asp-105. Asp-125 is a K(+) binding site. Position 128 (Thr-128) interacts with ATP. A substrate-binding site is contributed by Thr-179.

Belongs to the type III pantothenate kinase family. As to quaternary structure, homodimer. NH4(+) is required as a cofactor. K(+) serves as cofactor.

It is found in the cytoplasm. It carries out the reaction (R)-pantothenate + ATP = (R)-4'-phosphopantothenate + ADP + H(+). Its pathway is cofactor biosynthesis; coenzyme A biosynthesis; CoA from (R)-pantothenate: step 1/5. In terms of biological role, catalyzes the phosphorylation of pantothenate (Pan), the first step in CoA biosynthesis. The chain is Type III pantothenate kinase from Thermotoga sp. (strain RQ2).